Reading from the N-terminus, the 221-residue chain is Cytidylate kinase 1 (221 aa).

An ATP-binding site is contributed by 7–15 (GPSASGKSS).

This sequence belongs to the cytidylate kinase family. Type 1 subfamily.

It is found in the cytoplasm. The enzyme catalyses CMP + ATP = CDP + ADP. It carries out the reaction dCMP + ATP = dCDP + ADP. The polypeptide is Cytidylate kinase 1 (Borreliella afzelii (strain PKo) (Borrelia afzelii)).